The sequence spans 91 residues: Small ribosomal subunit protein bS20 (91 aa).

The disordered stretch occupies residues 1 to 23 (MANTPSAKKRAKQAEKRRSHNAS). A compositionally biased stretch (basic residues) spans 7–20 (AKKRAKQAEKRRSH).

It belongs to the bacterial ribosomal protein bS20 family.

In terms of biological role, binds directly to 16S ribosomal RNA. The chain is Small ribosomal subunit protein bS20 from Pseudomonas aeruginosa (strain LESB58).